Reading from the N-terminus, the 312-residue chain is R2-like ligand binding oxidase (312 aa).

Positions 68, 101, and 104 each coordinate Mn(2+). Positions 71–162 (VTQDIQPFMA…AAQVRASVTY (92 aa)) form a cross-link, 3-(O4'-tyrosyl)-valine (Val-Tyr). Position 101 (Glu-101) interacts with Fe cation. 3 residues coordinate Fe cation: Glu-167, Glu-202, and His-205.

Belongs to the ribonucleoside diphosphate reductase small chain family. R2-like ligand binding oxidase subfamily. In terms of assembly, homodimer. It depends on Fe cation as a cofactor. Requires Mn(2+) as cofactor.

Functionally, probable oxidase that might be involved in lipid metabolism. This Mycolicibacterium vanbaalenii (strain DSM 7251 / JCM 13017 / BCRC 16820 / KCTC 9966 / NRRL B-24157 / PYR-1) (Mycobacterium vanbaalenii) protein is R2-like ligand binding oxidase.